Reading from the N-terminus, the 917-residue chain is Intercellular adhesion molecule 5 (917 aa).

The first 31 residues, 1–31 (MPGPSPGLRRALLGLWAALGLGILGISAVAL), serve as a signal peptide directing secretion. At 32-833 (EPFWADLQPR…RITVRVAGPW (802 aa)) the chain is on the extracellular side. 9 Ig-like C2-type domains span residues 48 to 130 (GGSL…PLPS), 135 to 235 (GENF…SLIA), 242 to 329 (DSER…LLTL), 337 to 402 (GKMV…SSEL), 408 to 486 (PRLD…VTLT), 491 to 567 (PALD…VAVT), 572 to 651 (PSFE…NRHG), 665 to 738 (PQMD…RTVT), and 745 to 828 (PVVA…ITVR). N-linked (GlcNAc...) (high mannose) asparagine glycosylation is present at N54. 2 disulfides stabilise this stretch: C55/C99 and C59/C103. N-linked (GlcNAc...) asparagine glycans are attached at residues N74 and N137. C142 and C198 form a disulfide bridge. At T182 the chain carries Phosphothreonine. Residues N195, N214, N274, N316, N371, and N397 are each glycosylated (N-linked (GlcNAc...) asparagine). Cysteines 249 and 302 form a disulfide. Cysteines 344 and 383 form a disulfide. 3 cysteine pairs are disulfide-bonded: C415-C470, C498-C551, and C579-C644. Residues N582 and N645 are each glycosylated (N-linked (GlcNAc...) asparagine). The cysteines at positions 672 and 724 are disulfide-linked. N-linked (GlcNAc...) asparagine glycans are attached at residues N762, N793, and N794. The cysteines at positions 767 and 812 are disulfide-linked. The helical transmembrane segment at 834-854 (LWVAVGGAAGGAALLAAGAGL) threads the bilayer. At 855–917 (AFYVQSTACK…EVFAIQLTSS (63 aa)) the chain is on the cytoplasmic side. The segment covering 884-893 (GAGGTPGAEG) has biased composition (gly residues). The interval 884–908 (GAGGTPGAEGGAETPGTAESPADGE) is disordered.

The protein belongs to the immunoglobulin superfamily. ICAM family. Glycosylation at Asn-54 is critical for functional folding. Expressed on neurons in the most rostral segment of the mammalian brain, the telencephalon.

The protein resides in the membrane. ICAM proteins are ligands for the leukocyte adhesion protein LFA-1 (integrin alpha-L/beta-2). The sequence is that of Intercellular adhesion molecule 5 (Icam5) from Mus musculus (Mouse).